Here is a 731-residue protein sequence, read N- to C-terminus: Zinc finger protein 615 (731 aa).

A KRAB domain is found at 8–79 (LTLEDVAVDF…EDEIYSRICS (72 aa)). 19 consecutive C2H2-type zinc fingers follow at residues 204-226 (HVCS…QRVH), 232-254 (HVCS…QRTH), 260-282 (YECT…QKTH), 288-310 (YTCS…QRTH), 316-338 (HGCS…QKTH), 344-366 (YICS…HRTH), 372-394 (FICN…QQTH), 400-422 (YTCS…QRTH), 428-450 (YKCN…QRTH), 456-478 (YVCT…QRTH), 484-506 (YICN…QRTH), 512-534 (YVCG…QRTH), 540-562 (YICN…RRTH), 568-590 (YVCS…QRTH), 596-618 (YICN…QQTH), 624-646 (YKCN…QRFH), 652-674 (FACT…QRIH), 680-702 (YKCS…QRKH), and 708-730 (YGCS…RRIH).

The protein belongs to the krueppel C2H2-type zinc-finger protein family.

The protein resides in the nucleus. Functionally, may be involved in transcriptional regulation. The sequence is that of Zinc finger protein 615 (ZNF615) from Homo sapiens (Human).